Here is a 591-residue protein sequence, read N- to C-terminus: Probable cyclin-dependent kinase 9 (591 aa).

The segment at 1–385 (MKRSSSVSVE…FEQTANGKRQ (385 aa)) is interaction with pch1. The region spanning 36–339 (YHLMEKLGEG…ASMALEHEYF (304 aa)) is the Protein kinase domain. Residues 42–50 (LGEGTFGEV) and Lys65 contribute to the ATP site. Residue Asp166 is the Proton acceptor of the active site. The residue at position 211 (Tyr211) is a Phosphotyrosine. Thr212 carries the post-translational modification Phosphothreonine. 2 disordered regions span residues 341–534 (TPPY…KTQH) and 549–591 (ARQS…DTPK). Basic and acidic residues predominate over residues 358–372 (HEYDKRRKREQRDAN). Composition is skewed to polar residues over residues 404–415 (NYNSQPQYQRGS) and 428–465 (NVNYQPKRQQNFKPLTSDLPQKNSEFSETNAMNQTSNH). The binds to pct1 stretch occupies residues 442-523 (LTSDLPQKNS…NSKVQTTSRA (82 aa)). Positions 466–482 (SHADGQRYYRPEQDRSQ) are enriched in basic and acidic residues. Residues 491-502 (GRQGRQSSQSQQ) are compositionally biased toward low complexity. Residues 503 to 534 (PAWNVSSRYQNNSKVQTTSRASENADTNKTQH) show a composition bias toward polar residues. A Phosphothreonine modification is found at Thr565. Position 577 is a phosphoserine (Ser577).

It belongs to the protein kinase superfamily. CMGC Ser/Thr protein kinase family. CDC2/CDKX subfamily. In terms of assembly, interacts with pch1 cyclin via its N-terminal domain. Via its C-terminal domain, interacts with RNA triphosphatase pct1 which is involved in mRNA capping. Also interacts with pcm1.

It is found in the nucleus. It catalyses the reaction L-seryl-[protein] + ATP = O-phospho-L-seryl-[protein] + ADP + H(+). The catalysed reaction is L-threonyl-[protein] + ATP = O-phospho-L-threonyl-[protein] + ADP + H(+). It carries out the reaction [DNA-directed RNA polymerase] + ATP = phospho-[DNA-directed RNA polymerase] + ADP + H(+). May be activated by autophosphorylation or phosphorylation by a separate activating kinase. In terms of biological role, component of the positive transcription elongation factor b (P-TEFb) which consists of cdk9 and pch1, and which phosphorylates the C-terminal domain (CTD) of RNA polymerase II and spt5. This is Probable cyclin-dependent kinase 9 (cdk9) from Schizosaccharomyces pombe (strain 972 / ATCC 24843) (Fission yeast).